Consider the following 334-residue polypeptide: MSKNLLEQLREVTVVVADTGDIQAIEKFKPQDATTNPSLITAAAQMPEYQGIVDQTLLQAKKDAGDGATQAQIVSLAFDRLAVAFGLKILQIIPGRVSTEVDARLSYDTEATLTKARDLIAQYKAAGIGRDRVLIKIASTWEGIRAAEILEKEGIHCNLTLLFGLHQAIACAEAGVTLISPFVGRILDWYKKDTGRDSYPATEDPGVLSVTKIYNYYKKFGYKTEVMGASFRNLGEITELAGSDLLTISPSLLAELQSTVAELPRKLDPAKAASLSIEKISIDKASYDKMHAADRMATDKLDEGIKGFTKALEDLEKLLADRLVRLEGEVVASH.

Lys136 functions as the Schiff-base intermediate with substrate in the catalytic mechanism.

Belongs to the transaldolase family. Type 1 subfamily. In terms of assembly, homodimer.

It is found in the cytoplasm. The catalysed reaction is D-sedoheptulose 7-phosphate + D-glyceraldehyde 3-phosphate = D-erythrose 4-phosphate + beta-D-fructose 6-phosphate. Its pathway is carbohydrate degradation; pentose phosphate pathway; D-glyceraldehyde 3-phosphate and beta-D-fructose 6-phosphate from D-ribose 5-phosphate and D-xylulose 5-phosphate (non-oxidative stage): step 2/3. Its function is as follows. Transaldolase is important for the balance of metabolites in the pentose-phosphate pathway. The sequence is that of Transaldolase from Nostoc punctiforme (strain ATCC 29133 / PCC 73102).